We begin with the raw amino-acid sequence, 511 residues long: Cytochrome P450 4A7 (511 aa).

A propeptide spanning residues 1 to 4 (MSVS) is cleaved from the precursor. Residues glutamate 322 and cysteine 458 each coordinate heme.

The protein belongs to the cytochrome P450 family. Requires heme as cofactor. Liver, kidney, small intestine.

The protein resides in the endoplasmic reticulum membrane. It localises to the microsome membrane. The catalysed reaction is an omega-methyl-long-chain fatty acid + reduced [NADPH--hemoprotein reductase] + O2 = an omega-hydroxy-long-chain fatty acid + oxidized [NADPH--hemoprotein reductase] + H2O + H(+). Its function is as follows. Cytochromes P450 are a group of heme-thiolate monooxygenases. In liver microsomes, this enzyme is involved in an NADPH-dependent electron transport pathway. It oxidizes a variety of structurally unrelated compounds, including steroids, fatty acids, and xenobiotics. In terms of biological role, the kidney P-450 system is rather specialized for the omega-hydroxylation of fatty acids. Both P450-KA1 and P450-KA2 catalyze the omega- and (omega-1)-hydroxylation of various fatty acids with no drug-metabolizing activity, and hydroxylate prostaglandin A1 and A2 solely at the omega-position. This Oryctolagus cuniculus (Rabbit) protein is Cytochrome P450 4A7 (CYP4A7).